A 224-amino-acid polypeptide reads, in one-letter code: MLLTIPELLDAAQLAEIRRLLADAPFTDGRYSAGADARRVKHNEEVDPSDTRVRALNQLVLMPLYRHETFQAAALPRKLSGAFFARYLPGMQYGAHVDDPVMGPEGGRYRTDVSVTVFIGEPQSYEGGELVVETDFGEQQVKLPAGHAVIYPSSSLHRVSPVTGGERLVAVAWAESMVRDPARRQMLYELYQVHEALRRDNPDAEVTRRAGHVRANLMRMWADV.

The region spanning 78–176 is the Fe2OG dioxygenase domain; the sequence is KLSGAFFARY…RLVAVAWAES (99 aa). Fe cation-binding residues include His-96, Asp-98, and His-157. Arg-167 is a binding site for 2-oxoglutarate.

Fe(2+) is required as a cofactor. Requires L-ascorbate as cofactor.

This chain is PKHD-type hydroxylase Tgr7_2199, found in Thioalkalivibrio sulfidiphilus (strain HL-EbGR7).